The primary structure comprises 368 residues: Chaperone protein DnaJ (368 aa).

The J domain occupies 5-69; the sequence is DYYEVLGLDK…QKRAQYDRFG (65 aa). Residues 126–208 form a CR-type zinc finger; that stretch reads GKTETIELEI…CHGSGHVKKK (83 aa). 8 residues coordinate Zn(2+): Cys-139, Cys-142, Cys-156, Cys-159, Cys-182, Cys-185, Cys-196, and Cys-199. CXXCXGXG motif repeat units follow at residues 139–146, 156–163, 182–189, and 196–203; these read CDTCMGSG, CNRCGGSG, CSQCHGSG, and CPTCHGSG.

Belongs to the DnaJ family. In terms of assembly, homodimer. Zn(2+) serves as cofactor.

It is found in the cytoplasm. Functionally, participates actively in the response to hyperosmotic and heat shock by preventing the aggregation of stress-denatured proteins and by disaggregating proteins, also in an autonomous, DnaK-independent fashion. Unfolded proteins bind initially to DnaJ; upon interaction with the DnaJ-bound protein, DnaK hydrolyzes its bound ATP, resulting in the formation of a stable complex. GrpE releases ADP from DnaK; ATP binding to DnaK triggers the release of the substrate protein, thus completing the reaction cycle. Several rounds of ATP-dependent interactions between DnaJ, DnaK and GrpE are required for fully efficient folding. Also involved, together with DnaK and GrpE, in the DNA replication of plasmids through activation of initiation proteins. The polypeptide is Chaperone protein DnaJ (Exiguobacterium sp. (strain ATCC BAA-1283 / AT1b)).